The sequence spans 878 residues: Phosphoenolpyruvate carboxylase (878 aa).

Active-site residues include histidine 140 and lysine 545.

Belongs to the PEPCase type 1 family. Mg(2+) is required as a cofactor.

It carries out the reaction oxaloacetate + phosphate = phosphoenolpyruvate + hydrogencarbonate. Its function is as follows. Forms oxaloacetate, a four-carbon dicarboxylic acid source for the tricarboxylic acid cycle. In Pseudomonas paraeruginosa (strain DSM 24068 / PA7) (Pseudomonas aeruginosa (strain PA7)), this protein is Phosphoenolpyruvate carboxylase.